The chain runs to 640 residues: Probable inactive receptor kinase At3g08680 (640 aa).

Positions Met-1–Ser-22 are cleaved as a signal peptide. 5 LRR repeats span residues Ala-93–Leu-115, Phe-117–His-138, Arg-139–Thr-162, Gln-163–Leu-185, and Lys-186–Phe-206. Positions Leu-222–Gly-249 are disordered. A compositionally biased stretch (low complexity) spans Pro-226 to Asn-247. A helical transmembrane segment spans residues Gly-260–Ile-280. Positions Asp-289–Gly-315 are disordered. The 274-residue stretch at Arg-341 to Ile-614 folds into the Protein kinase domain. At Ser-343 the chain carries Phosphoserine. ATP is bound at residue Leu-347–Thr-355. Thr-364 carries the post-translational modification Phosphothreonine. Residue Lys-369 participates in ATP binding. A phosphothreonine mark is found at Thr-441, Thr-514, and Thr-564. The tract at residues Glu-612 to Val-640 is disordered.

It belongs to the protein kinase superfamily. Tyr protein kinase family.

The protein resides in the membrane. This Arabidopsis thaliana (Mouse-ear cress) protein is Probable inactive receptor kinase At3g08680.